Here is a 183-residue protein sequence, read N- to C-terminus: Hypoxanthine/guanine phosphoribosyltransferase (183 aa).

It belongs to the purine/pyrimidine phosphoribosyltransferase family. Archaeal HPRT subfamily. In terms of assembly, homodimer.

It localises to the cytoplasm. The enzyme catalyses IMP + diphosphate = hypoxanthine + 5-phospho-alpha-D-ribose 1-diphosphate. The catalysed reaction is GMP + diphosphate = guanine + 5-phospho-alpha-D-ribose 1-diphosphate. It participates in purine metabolism; IMP biosynthesis via salvage pathway; IMP from hypoxanthine: step 1/1. Its function is as follows. Catalyzes a salvage reaction resulting in the formation of IMP that is energically less costly than de novo synthesis. The chain is Hypoxanthine/guanine phosphoribosyltransferase from Methanocaldococcus infernus (strain DSM 11812 / JCM 15783 / ME).